We begin with the raw amino-acid sequence, 589 residues long: Phenylalanine--tRNA ligase beta subunit (589 aa).

Residues 302 to 377 (LEVREERISV…IAYGYNNIKK (76 aa)) form the B5 domain. Residues aspartate 355, aspartate 361, glutamate 364, and aspartate 365 each coordinate Mg(2+).

This sequence belongs to the phenylalanyl-tRNA synthetase beta subunit family. Type 2 subfamily. In terms of assembly, tetramer of two alpha and two beta subunits. The cofactor is Mg(2+).

Its subcellular location is the cytoplasm. The catalysed reaction is tRNA(Phe) + L-phenylalanine + ATP = L-phenylalanyl-tRNA(Phe) + AMP + diphosphate + H(+). This chain is Phenylalanine--tRNA ligase beta subunit, found in Drosophila melanogaster (Fruit fly).